The chain runs to 214 residues: Glutathione S-transferase 1 (214 aa).

The region spanning 2–83 is the GST N-terminal domain; the sequence is APMKLYGAVM…YAARKNKPEL (82 aa). Residues serine 12, 41–42, 54–55, and 67–68 contribute to the glutathione site; these read HK, QV, and ES. Positions 88 to 214 constitute a GST C-terminal domain; it reads NLEEAAMVDV…KVAALMKPSA (127 aa).

The protein belongs to the GST superfamily. Phi family. In terms of assembly, homodimer or heterodimer of GST-I and GST-IV (=GST-II). In terms of tissue distribution, expressed in the stem and leaves, lower levels are seen in the pollen and endosperm.

The enzyme catalyses RX + glutathione = an S-substituted glutathione + a halide anion + H(+). In terms of biological role, conjugation of reduced glutathione to a wide number of exogenous and endogenous hydrophobic electrophiles. Involved in the detoxification of certain herbicides. This is Glutathione S-transferase 1 (GST1) from Zea mays (Maize).